We begin with the raw amino-acid sequence, 417 residues long: Glutamyl-tRNA reductase (417 aa).

Substrate is bound by residues 49 to 52 (TCNR), Ser109, 114 to 116 (ESQ), and Gln120. Cys50 (nucleophile) is an active-site residue. 189 to 194 (GLGEIG) provides a ligand contact to NADP(+).

Belongs to the glutamyl-tRNA reductase family. As to quaternary structure, homodimer.

It catalyses the reaction (S)-4-amino-5-oxopentanoate + tRNA(Glu) + NADP(+) = L-glutamyl-tRNA(Glu) + NADPH + H(+). The protein operates within porphyrin-containing compound metabolism; protoporphyrin-IX biosynthesis; 5-aminolevulinate from L-glutamyl-tRNA(Glu): step 1/2. In terms of biological role, catalyzes the NADPH-dependent reduction of glutamyl-tRNA(Glu) to glutamate 1-semialdehyde (GSA). In Streptococcus sanguinis (strain SK36), this protein is Glutamyl-tRNA reductase.